The primary structure comprises 318 residues: tRNA-modifying protein YgfZ (318 aa).

The folate site is built by Trp-28 and Trp-182.

It belongs to the tRNA-modifying YgfZ family.

The protein localises to the cytoplasm. Functionally, folate-binding protein involved in regulating the level of ATP-DnaA and in the modification of some tRNAs. It is probably a key factor in regulatory networks that act via tRNA modification, such as initiation of chromosomal replication. The sequence is that of tRNA-modifying protein YgfZ from Aliivibrio fischeri (strain ATCC 700601 / ES114) (Vibrio fischeri).